Reading from the N-terminus, the 88-residue chain is HssA/B-like protein 64 (88 aa).

Residues 1-24 (MTLFSSISSMSSSMTSSKSSFASF) show a composition bias toward low complexity. Disordered stretches follow at residues 1–25 (MTLF…ASFG) and 45–88 (GVSS…GNSC). Residues 56-66 (AKSGGDCGGKG) show a composition bias toward gly residues.

The protein belongs to the hssA/B family.

The sequence is that of HssA/B-like protein 64 (hssl64) from Dictyostelium discoideum (Social amoeba).